The sequence spans 369 residues: Histidine decarboxylase (369 aa).

A substrate-binding site is contributed by His-119. Lys-230 carries the N6-(pyridoxal phosphate)lysine modification.

This sequence belongs to the group II decarboxylase family. Homotetramer. It depends on pyridoxal 5'-phosphate as a cofactor.

The enzyme catalyses L-histidine + H(+) = histamine + CO2. The polypeptide is Histidine decarboxylase (Mesorhizobium japonicum (strain LMG 29417 / CECT 9101 / MAFF 303099) (Mesorhizobium loti (strain MAFF 303099))).